Consider the following 131-residue polypeptide: Large ribosomal subunit protein bL12 (131 aa).

The protein belongs to the bacterial ribosomal protein bL12 family. Homodimer. Part of the ribosomal stalk of the 50S ribosomal subunit. Forms a multimeric L10(L12)X complex, where L10 forms an elongated spine to which 2 to 4 L12 dimers bind in a sequential fashion. Binds GTP-bound translation factors.

In terms of biological role, forms part of the ribosomal stalk which helps the ribosome interact with GTP-bound translation factors. Is thus essential for accurate translation. The chain is Large ribosomal subunit protein bL12 from Prochlorococcus marinus (strain MIT 9313).